The following is a 135-amino-acid chain: T-cell receptor gamma chain V region V108A (135 aa).

The first 18 residues, 1-18 (MLLLRWFTSCCLWVFGLG), serve as a signal peptide directing secretion. Residues 19–116 (QLEQTELSVT…EATYYCAVWM (98 aa)) form a v segment region. Positions 117-135 (RWSSGFHKVFAEGTKLIVI) are j segment.

The sequence is that of T-cell receptor gamma chain V region V108A from Mus musculus (Mouse).